A 159-amino-acid polypeptide reads, in one-letter code: MKRVAVLLKTVMCEFLKCDYNGYDRIISLLRRILTLICTPNLNGLTIKRVIDSMQSLEYIKQTCNFKLQMCISSMAFKRNNALQNCNHYAWCDDHCSDIGRPMTTVRGQCSKCTKPHLMRWLLLHYDNPYPSNSEFYDLSAATGLTRTQLRNWFSNRRR.

The segment at residues Met-103–Arg-159 is a DNA-binding region (homeobox; TALE-type; partial).

This sequence belongs to the TALE/M-ATYP homeobox family.

It is found in the nucleus. In terms of biological role, mating type proteins are sequence specific DNA-binding proteins that act as master switches in yeast differentiation by controlling gene expression in a cell type-specific fashion. Required for meiosis, but plays no role in conjugation. This is Mating-type P-specific polypeptide Pi (matPi) from Schizosaccharomyces kambucha (Fission yeast).